A 596-amino-acid chain; its full sequence is Elongation factor 4 (596 aa).

A tr-type G domain is found at 2–184; sequence KNIRNFAIIA…SIVKYIPPPE (183 aa). GTP-binding positions include 14–19 and 131–134; these read DHGKST and NKID.

It belongs to the TRAFAC class translation factor GTPase superfamily. Classic translation factor GTPase family. LepA subfamily.

Its subcellular location is the cell inner membrane. It carries out the reaction GTP + H2O = GDP + phosphate + H(+). In terms of biological role, required for accurate and efficient protein synthesis under certain stress conditions. May act as a fidelity factor of the translation reaction, by catalyzing a one-codon backward translocation of tRNAs on improperly translocated ribosomes. Back-translocation proceeds from a post-translocation (POST) complex to a pre-translocation (PRE) complex, thus giving elongation factor G a second chance to translocate the tRNAs correctly. Binds to ribosomes in a GTP-dependent manner. The protein is Elongation factor 4 of Neorickettsia sennetsu (strain ATCC VR-367 / Miyayama) (Ehrlichia sennetsu).